Consider the following 492-residue polypeptide: Cytoplasmic dynein 1 light intermediate chain 2 (492 aa).

61–68 (GEDGSGKT) contributes to the ATP binding site. 3 disordered regions span residues 188-207 (EEGCQGSPQRRGPLTSGSDE), 370-423 (LAKQ…KNNA), and 437-492 (LSKK…ENEA). Phosphoserine occurs at positions 194, 383, and 391. The segment covering 370-383 (LAKQPATPTRTSES) has biased composition (polar residues). Position 397 is an omega-N-methylarginine (arginine 397). Residues 437–469 (LSKKTGSPGSPSAGGVQSTAKKSGQKTVLSNVQ) show a composition bias toward polar residues. Threonine 441 is modified (phosphothreonine). A phosphoserine mark is found at serine 443 and serine 446. Over residues 471–480 (ELDRMTRKPD) the composition is skewed to basic and acidic residues. The span at 482-492 (MVTNSSTENEA) shows a compositional bias: polar residues.

It belongs to the dynein light intermediate chain family. Homodimer. The cytoplasmic dynein 1 complex consists of two catalytic heavy chains (HCs) and a number of non-catalytic subunits presented by intermediate chains (ICs), light intermediate chains (LICs) and light chains (LCs); the composition seems to vary in respect to the IC, LIC and LC composition. The heavy chain homodimer serves as a scaffold for the probable homodimeric assembly of the respective non-catalytic subunits. The ICs and LICs bind directly to the HC dimer and the LCs assemble on the IC dimer. Interacts with DYNC1H1; DYNC1LI1 and DYNC1LI2 bind mutually exclusive to DYNC1H.

It is found in the cytoplasm. It localises to the cytoskeleton. Its function is as follows. Acts as one of several non-catalytic accessory components of the cytoplasmic dynein 1 complex that are thought to be involved in linking dynein to cargos and to adapter proteins that regulate dynein function. Cytoplasmic dynein 1 acts as a motor for the intracellular retrograde motility of vesicles and organelles along microtubules. May play a role in binding dynein to membranous organelles or chromosomes. The polypeptide is Cytoplasmic dynein 1 light intermediate chain 2 (Dync1li2) (Mus musculus (Mouse)).